The chain runs to 338 residues: tRNA dimethylallyltransferase (338 aa).

G13–T20 is an ATP binding site. Residue T15–T20 coordinates substrate. 2 interaction with substrate tRNA regions span residues D38–L41 and Q162–R166.

The protein belongs to the IPP transferase family. Monomer. It depends on Mg(2+) as a cofactor.

It carries out the reaction adenosine(37) in tRNA + dimethylallyl diphosphate = N(6)-dimethylallyladenosine(37) in tRNA + diphosphate. Functionally, catalyzes the transfer of a dimethylallyl group onto the adenine at position 37 in tRNAs that read codons beginning with uridine, leading to the formation of N6-(dimethylallyl)adenosine (i(6)A). This Cellvibrio japonicus (strain Ueda107) (Pseudomonas fluorescens subsp. cellulosa) protein is tRNA dimethylallyltransferase.